Reading from the N-terminus, the 501-residue chain is NAD(P)H-quinone oxidoreductase subunit 2, chloroplastic (501 aa).

The next 14 helical transmembrane spans lie at 15 to 35 (ILPE…DLIL), 42 to 62 (VFFF…IFQL), 82 to 102 (IFRI…IDFI), 107 to 127 (LAIT…MFLC), 132 to 152 (LITI…LSGY), 167 to 187 (LLIG…LYGL), 210 to 230 (FGSL…LSLV), 244 to 264 (PTPV…ALLV), 278 to 298 (WHSL…LVAI), 307 to 327 (LAYS…TGNF), 334 to 354 (IVYL…IILF), 378 to 398 (FSLA…GFFG), 410 to 430 (GLYF…YYYL), and 466 to 486 (VSII…NPII).

It belongs to the complex I subunit 2 family. In terms of assembly, NDH is composed of at least 16 different subunits, 5 of which are encoded in the nucleus.

Its subcellular location is the plastid. The protein localises to the chloroplast thylakoid membrane. It catalyses the reaction a plastoquinone + NADH + (n+1) H(+)(in) = a plastoquinol + NAD(+) + n H(+)(out). It carries out the reaction a plastoquinone + NADPH + (n+1) H(+)(in) = a plastoquinol + NADP(+) + n H(+)(out). Its function is as follows. NDH shuttles electrons from NAD(P)H:plastoquinone, via FMN and iron-sulfur (Fe-S) centers, to quinones in the photosynthetic chain and possibly in a chloroplast respiratory chain. The immediate electron acceptor for the enzyme in this species is believed to be plastoquinone. Couples the redox reaction to proton translocation, and thus conserves the redox energy in a proton gradient. The polypeptide is NAD(P)H-quinone oxidoreductase subunit 2, chloroplastic (Physcomitrium patens (Spreading-leaved earth moss)).